The following is a 112-amino-acid chain: Citrate synthase (112 aa).

Residues H39 and D97 contribute to the active site.

The protein belongs to the citrate synthase family.

It carries out the reaction oxaloacetate + acetyl-CoA + H2O = citrate + CoA + H(+). It functions in the pathway carbohydrate metabolism; tricarboxylic acid cycle; isocitrate from oxaloacetate: step 1/2. This chain is Citrate synthase (gltA), found in Bartonella vinsonii subsp. berkhoffii.